The primary structure comprises 230 residues: Dephospho-CoA kinase (230 aa).

The interval 1-20 is disordered; sequence MSKYAAIPSPYSHQPQAPDH. The DPCK domain occupies 26–225; the sequence is VVGLTGGIGS…QDYLKLAQQL (200 aa). 34 to 39 contacts ATP; it reads GSGKSA.

This sequence belongs to the CoaE family.

The protein localises to the cytoplasm. The enzyme catalyses 3'-dephospho-CoA + ATP = ADP + CoA + H(+). Its pathway is cofactor biosynthesis; coenzyme A biosynthesis; CoA from (R)-pantothenate: step 5/5. Catalyzes the phosphorylation of the 3'-hydroxyl group of dephosphocoenzyme A to form coenzyme A. The sequence is that of Dephospho-CoA kinase from Psychrobacter arcticus (strain DSM 17307 / VKM B-2377 / 273-4).